Reading from the N-terminus, the 490-residue chain is MNNLESWEAVIGLETHVQLNTKSKIFTSASTAFGDAPNTHIDPVVCGLPGTLPVLNETVLEYAVKTSLALNLNVAEHCKFDRKQYFYPDLPKNYQISQFDEPLAENGWLEVEIIEKDKEPYIKKIGIERLHMEEDAGKLVHSGSDRLAGSKYSLVDYNRAGIALCEIVSKPDIRSGKEASEYASEIRRTVRYLGVSDGNMQEGSLRCDVNISVRKGPNAPFGTKVEIKNMNSFSAIQKACDYEIARQIEVYENGGKIFQETRLWDEAKQLTKSMRLKEGSSDYRYFPDPDLGPIEITKAQQEIWFKELPELPSKKRYKYVSQFGLSAYDARVISDEISMANFFEETVANGAEAKLASNWVTSDIVGYLKSNKLSFSELKLSPENLAEMINMISKNIISGKIAKEILPELIQKNISPKKLVEEKGLAMISDSSSISPIIDELINEHPNEVQAFKNGKTKLLGFFVGQLMKRTKGKADPKLANKLLMEKLNS.

The protein belongs to the GatB/GatE family. GatB subfamily. As to quaternary structure, heterotrimer of A, B and C subunits.

The catalysed reaction is L-glutamyl-tRNA(Gln) + L-glutamine + ATP + H2O = L-glutaminyl-tRNA(Gln) + L-glutamate + ADP + phosphate + H(+). The enzyme catalyses L-aspartyl-tRNA(Asn) + L-glutamine + ATP + H2O = L-asparaginyl-tRNA(Asn) + L-glutamate + ADP + phosphate + 2 H(+). Its function is as follows. Allows the formation of correctly charged Asn-tRNA(Asn) or Gln-tRNA(Gln) through the transamidation of misacylated Asp-tRNA(Asn) or Glu-tRNA(Gln) in organisms which lack either or both of asparaginyl-tRNA or glutaminyl-tRNA synthetases. The reaction takes place in the presence of glutamine and ATP through an activated phospho-Asp-tRNA(Asn) or phospho-Glu-tRNA(Gln). The sequence is that of Aspartyl/glutamyl-tRNA(Asn/Gln) amidotransferase subunit B from Prochlorococcus marinus (strain AS9601).